The primary structure comprises 185 residues: Elongation factor P (185 aa).

It belongs to the elongation factor P family.

The protein localises to the cytoplasm. Its pathway is protein biosynthesis; polypeptide chain elongation. In terms of biological role, involved in peptide bond synthesis. Stimulates efficient translation and peptide-bond synthesis on native or reconstituted 70S ribosomes in vitro. Probably functions indirectly by altering the affinity of the ribosome for aminoacyl-tRNA, thus increasing their reactivity as acceptors for peptidyl transferase. The protein is Elongation factor P (efp) of Thermotoga maritima (strain ATCC 43589 / DSM 3109 / JCM 10099 / NBRC 100826 / MSB8).